A 341-amino-acid polypeptide reads, in one-letter code: Glyceraldehyde-3-phosphate dehydrogenase 2 (341 aa).

NAD(+) is bound by residues Arg12 to Ile13, Arg78, and Thr120. Residues Ser152 to Thr154 and Thr183 each bind D-glyceraldehyde 3-phosphate. Catalysis depends on Cys153, which acts as the Nucleophile. Residue Asn184 participates in NAD(+) binding. D-glyceraldehyde 3-phosphate contacts are provided by residues Arg198, Thr211–Gly212, and Arg234. Asn313 contacts NAD(+).

It belongs to the glyceraldehyde-3-phosphate dehydrogenase family. Homotetramer.

The protein resides in the cytoplasm. The catalysed reaction is D-glyceraldehyde 3-phosphate + phosphate + NAD(+) = (2R)-3-phospho-glyceroyl phosphate + NADH + H(+). It functions in the pathway carbohydrate degradation; glycolysis; pyruvate from D-glyceraldehyde 3-phosphate: step 1/5. Catalyzes the oxidative phosphorylation of glyceraldehyde 3-phosphate (G3P) to 1,3-bisphosphoglycerate (BPG) using the cofactor NAD. The first reaction step involves the formation of a hemiacetal intermediate between G3P and a cysteine residue, and this hemiacetal intermediate is then oxidized to a thioester, with concomitant reduction of NAD to NADH. The reduced NADH is then exchanged with the second NAD, and the thioester is attacked by a nucleophilic inorganic phosphate to produce BPG. This Staphylococcus aureus (strain MRSA252) protein is Glyceraldehyde-3-phosphate dehydrogenase 2 (gapA2).